A 136-amino-acid chain; its full sequence is Large ribosomal subunit protein uL16 (136 aa).

The protein belongs to the universal ribosomal protein uL16 family. Part of the 50S ribosomal subunit.

In terms of biological role, binds 23S rRNA and is also seen to make contacts with the A and possibly P site tRNAs. This is Large ribosomal subunit protein uL16 from Haemophilus ducreyi (strain 35000HP / ATCC 700724).